The sequence spans 754 residues: Polyribonucleotide nucleotidyltransferase (754 aa).

Mg(2+) is bound by residues D525 and D531. The KH domain maps to 591–650; it reads PRITTIKVPVDKIGEVIGPKGKMINSITEETGASISIEDDGTVFVGASNGEAAQAAIDKI. An S1 motif domain is found at 662-731; it reads GERFLGTVVK…NRGKISLVLV (70 aa).

This sequence belongs to the polyribonucleotide nucleotidyltransferase family. The cofactor is Mg(2+).

The protein localises to the cytoplasm. The enzyme catalyses RNA(n+1) + phosphate = RNA(n) + a ribonucleoside 5'-diphosphate. In terms of biological role, involved in mRNA degradation. Catalyzes the phosphorolysis of single-stranded polyribonucleotides processively in the 3'- to 5'-direction. This chain is Polyribonucleotide nucleotidyltransferase, found in Mycolicibacterium vanbaalenii (strain DSM 7251 / JCM 13017 / BCRC 16820 / KCTC 9966 / NRRL B-24157 / PYR-1) (Mycobacterium vanbaalenii).